Reading from the N-terminus, the 408-residue chain is Phosphoglycerate kinase (408 aa).

Substrate-binding positions include 24 to 26 (DLN), Arg39, 62 to 65 (HLGR), Arg121, and Arg161. ATP-binding positions include Lys211, Gly307, Glu338, and 364 to 367 (GGDS).

It belongs to the phosphoglycerate kinase family. Monomer.

The protein localises to the cytoplasm. It carries out the reaction (2R)-3-phosphoglycerate + ATP = (2R)-3-phospho-glyceroyl phosphate + ADP. It functions in the pathway carbohydrate degradation; glycolysis; pyruvate from D-glyceraldehyde 3-phosphate: step 2/5. In Paenarthrobacter aurescens (strain TC1), this protein is Phosphoglycerate kinase.